The primary structure comprises 237 residues: Putative exosome complex component rrp40 (237 aa).

The S1 motif domain occupies 67 to 137 (EDMVIGTIIE…EPEVVCLSQK (71 aa)).

Belongs to the RRP40 family. In terms of assembly, component of the RNA exosome complex.

Its subcellular location is the cytoplasm. The protein localises to the nucleus. The protein resides in the nucleolus. In terms of biological role, non-catalytic component of the RNA exosome complex which has 3'-&gt;5' exoribonuclease activity and participates in a multitude of cellular RNA processing and degradation events. The protein is Putative exosome complex component rrp40 (exosc3) of Dictyostelium discoideum (Social amoeba).